The sequence spans 323 residues: Probable cell division protein WhiA (323 aa).

Residues 275 to 309 (TLKELGEMLTTGQVSKSGINHRLRKLDQIAERLRS) constitute a DNA-binding region (H-T-H motif).

Belongs to the WhiA family.

Involved in cell division and chromosome segregation. In Listeria monocytogenes serotype 4a (strain HCC23), this protein is Probable cell division protein WhiA.